A 169-amino-acid chain; its full sequence is ATP synthase subunit b (169 aa).

Residues 11-31 form a helical membrane-spanning segment; the sequence is IPSFIAQVVNFGLLLGLLYLF.

It belongs to the ATPase B chain family. As to quaternary structure, F-type ATPases have 2 components, F(1) - the catalytic core - and F(0) - the membrane proton channel. F(1) has five subunits: alpha(3), beta(3), gamma(1), delta(1), epsilon(1). F(0) has three main subunits: a(1), b(2) and c(10-14). The alpha and beta chains form an alternating ring which encloses part of the gamma chain. F(1) is attached to F(0) by a central stalk formed by the gamma and epsilon chains, while a peripheral stalk is formed by the delta and b chains.

The protein resides in the cell membrane. Its function is as follows. F(1)F(0) ATP synthase produces ATP from ADP in the presence of a proton or sodium gradient. F-type ATPases consist of two structural domains, F(1) containing the extramembraneous catalytic core and F(0) containing the membrane proton channel, linked together by a central stalk and a peripheral stalk. During catalysis, ATP synthesis in the catalytic domain of F(1) is coupled via a rotary mechanism of the central stalk subunits to proton translocation. Component of the F(0) channel, it forms part of the peripheral stalk, linking F(1) to F(0). The chain is ATP synthase subunit b from Dehalococcoides mccartyi (strain ATCC BAA-2266 / KCTC 15142 / 195) (Dehalococcoides ethenogenes (strain 195)).